We begin with the raw amino-acid sequence, 374 residues long: AA14 family lytic polysaccharide monooxygenase B (374 aa).

An N-terminal signal peptide occupies residues 1 to 18 (MIPVFLAAIAVFLPLTSG). N31, N49, N94, and N151 each carry an N-linked (GlcNAc...) asparagine glycan. Intrachain disulfides connect C85–C108, C127–C154, C171–C176, C178–C200, and C220–C236. 2 N-linked (GlcNAc...) asparagine glycosylation sites follow: N235 and N315. The segment at 306–374 (ISNATPAPSN…TQSRKMRYVF (69 aa)) is disordered. A compositionally biased stretch (low complexity) spans 313-344 (PSNGSCSSRPPSSPVSSSAASTTTSRSPRPSA).

It belongs to the polysaccharide monooxygenase AA14 family. Cu(2+) serves as cofactor.

Its subcellular location is the secreted. Lytic polysaccharide monooxygenase (LPMO) that oxidatively cleaves xylan with both C1 and C4 regioselectivity and that specifically targets the protective shield made by heteroxylans that cover cellulose microfibrils in wood. Catalysis by LPMOs requires the reduction of the active-site copper from Cu(II) to Cu(I) by a reducing agent and H(2)O(2) or O(2) as a cosubstrate. Cleavage occurs only when xylans are bound to cellulose and not when they are in solution. Increases the efficiency of wood saccharification through oxidative cleavage of highly refractory xylan-coated cellulose fibers via synergistic relationship with xylan-active enzymes, xylobiohydrolases and cellobiohydrolases. The sequence is that of AA14 family lytic polysaccharide monooxygenase B from Pycnoporus cinnabarinus (Cinnabar-red polypore).